Here is a 153-residue protein sequence, read N- to C-terminus: ORM1-like protein 2 (153 aa).

Residues M1–G21 lie on the Cytoplasmic side of the membrane. 2 helical membrane passes run I22–F42 and F43–F63. At L64 to S105 the chain is on the cytoplasmic side. A helical transmembrane segment spans residues P106 to I126. Residues N127 to Y153 lie on the Extracellular side of the membrane.

Belongs to the ORM family. In terms of assembly, ceramide-sensitive subunit of the serine palmitoyltransferase (SPT) complex, which is also composed of SPTLC1, SPTLC2/3 and SPTSSA/B.

The protein resides in the endoplasmic reticulum membrane. In terms of biological role, plays an essential role in the homeostatic regulation of sphingolipid de novo biosynthesis by modulating the activity of the serine palmitoyltransferase (SPT) in response to ceramide levels. When complexed to SPT, the binding of ceramides to its N-terminus stabilizes a conformation that block SPT substrate entry, hence preventing SPT catalytic activity. Through this mechanism, maintains ceramide levels at sufficient concentrations for the production of complex sphingolipids, but which prevents the accumulation of ceramides to levels that trigger apoptosis. The protein is ORM1-like protein 2 (Ormdl2) of Mus musculus (Mouse).